The following is a 192-amino-acid chain: GTP-dependent dephospho-CoA kinase (192 aa).

6 residues coordinate GTP: Asp-49, Val-50, Val-51, Asp-68, Lys-70, and Glu-127.

The protein belongs to the GTP-dependent DPCK family.

The enzyme catalyses 3'-dephospho-CoA + GTP = GDP + CoA + H(+). It participates in cofactor biosynthesis; coenzyme A biosynthesis. Functionally, catalyzes the GTP-dependent phosphorylation of the 3'-hydroxyl group of dephosphocoenzyme A to form coenzyme A (CoA). This Halorubrum lacusprofundi (strain ATCC 49239 / DSM 5036 / JCM 8891 / ACAM 34) protein is GTP-dependent dephospho-CoA kinase.